Consider the following 473-residue polypeptide: Putative BTB/POZ domain-containing protein R765 (473 aa).

In terms of domain architecture, BTB spans 2–72 (TNIQLVIKDD…KIYDREITAD (71 aa)).

The protein belongs to the mimivirus BTB/WD family.

The sequence is that of Putative BTB/POZ domain-containing protein R765 from Acanthamoeba polyphaga mimivirus (APMV).